Reading from the N-terminus, the 139-residue chain is ATP synthase epsilon chain (139 aa).

The protein belongs to the ATPase epsilon chain family. In terms of assembly, F-type ATPases have 2 components, CF(1) - the catalytic core - and CF(0) - the membrane proton channel. CF(1) has five subunits: alpha(3), beta(3), gamma(1), delta(1), epsilon(1). CF(0) has three main subunits: a, b and c.

The protein resides in the cell inner membrane. Its function is as follows. Produces ATP from ADP in the presence of a proton gradient across the membrane. The polypeptide is ATP synthase epsilon chain (Pectobacterium carotovorum subsp. carotovorum (strain PC1)).